The primary structure comprises 481 residues: Aspartyl/glutamyl-tRNA(Asn/Gln) amidotransferase subunit B (481 aa).

It belongs to the GatB/GatE family. GatB subfamily. In terms of assembly, heterotrimer of A, B and C subunits.

It catalyses the reaction L-glutamyl-tRNA(Gln) + L-glutamine + ATP + H2O = L-glutaminyl-tRNA(Gln) + L-glutamate + ADP + phosphate + H(+). The catalysed reaction is L-aspartyl-tRNA(Asn) + L-glutamine + ATP + H2O = L-asparaginyl-tRNA(Asn) + L-glutamate + ADP + phosphate + 2 H(+). In terms of biological role, allows the formation of correctly charged Asn-tRNA(Asn) or Gln-tRNA(Gln) through the transamidation of misacylated Asp-tRNA(Asn) or Glu-tRNA(Gln) in organisms which lack either or both of asparaginyl-tRNA or glutaminyl-tRNA synthetases. The reaction takes place in the presence of glutamine and ATP through an activated phospho-Asp-tRNA(Asn) or phospho-Glu-tRNA(Gln). The polypeptide is Aspartyl/glutamyl-tRNA(Asn/Gln) amidotransferase subunit B (Pseudomonas aeruginosa (strain LESB58)).